Here is a 211-residue protein sequence, read N- to C-terminus: Large ribosomal subunit protein bL17c (211 aa).

The transit peptide at 1 to 95 (MAIPMSMAMA…IVDGGGRIYA (95 aa)) directs the protein to the chloroplast.

Belongs to the bacterial ribosomal protein bL17 family. Part of the 50S ribosomal subunit.

The protein resides in the plastid. The protein localises to the chloroplast. This protein binds directly to 23S ribosomal RNA. This Arabidopsis thaliana (Mouse-ear cress) protein is Large ribosomal subunit protein bL17c (RPL17).